Reading from the N-terminus, the 213-residue chain is Bcl-2-related ovarian killer protein (213 aa).

The BH4 signature appears at 32 to 44; the sequence is KALCRDYINSRLI. A BH3 motif is present at residues 67–83; sequence VSAILLRLGDELEYIRP. The BH1 signature appears at 113–132; the sequence is QIFTAGITWGKVVSLYAVAA. The BH2 signature appears at 165-179; sequence WLKRRGGWADITKCV. The chain crosses the membrane as a helical span at residues 190–210; sequence WLVAAVCSFGHFLKAIFFVLL.

The protein belongs to the Bcl-2 family.

It localises to the membrane. Its function is as follows. May play a role in apoptosis. The sequence is that of Bcl-2-related ovarian killer protein from Gallus gallus (Chicken).